We begin with the raw amino-acid sequence, 375 residues long: Probable L-tyrosine/L-aspartate decarboxylase (375 aa).

Lysine 226 is modified (N6-(pyridoxal phosphate)lysine).

This sequence belongs to the group II decarboxylase family. MfnA subfamily. The cofactor is pyridoxal 5'-phosphate.

It catalyses the reaction L-tyrosine + H(+) = tyramine + CO2. The catalysed reaction is L-aspartate + H(+) = beta-alanine + CO2. The protein operates within cofactor biosynthesis; methanofuran biosynthesis. Its pathway is cofactor biosynthesis; coenzyme A biosynthesis. Functionally, catalyzes the decarboxylation of L-tyrosine to produce tyramine for methanofuran biosynthesis. Can also catalyze the decarboxylation of L-aspartate to produce beta-alanine for coenzyme A (CoA) biosynthesis. In Methanocella arvoryzae (strain DSM 22066 / NBRC 105507 / MRE50), this protein is Probable L-tyrosine/L-aspartate decarboxylase.